Here is a 395-residue protein sequence, read N- to C-terminus: Acid ceramidase (395 aa).

An N-terminal signal peptide occupies residues 1–21 (MPGRSRVALVLLAAAVSCAVA). The cysteines at positions 31 and 340 are disulfide-linked. Cys143 (nucleophile) is an active-site residue. N-linked (GlcNAc...) asparagine glycosylation is found at Asn195, Asn259, Asn286, and Asn342. Residues Cys388 and Cys392 are joined by a disulfide bond.

It belongs to the acid ceramidase family. As to quaternary structure, heterodimer; disulfide-linked. The heterodimer is composed of the disulfide-linked alpha and beta chains produced by autocatalytic cleavage of the precursor. N-glycosylated. Post-translationally, proteolytically cleaved into two chains alpha and beta that remain associated via a disulfide bond. Cleavage gives rise to a conformation change that activates the enzyme. The same catalytic Cys residue mediates the autoproteolytic cleavage and subsequent hydrolysis of lipid substrates. The beta chain may undergo an additional C-terminal processing.

The protein resides in the lysosome. It localises to the secreted. The catalysed reaction is an N-acylsphing-4-enine + H2O = sphing-4-enine + a fatty acid. It carries out the reaction N-dodecanoylsphing-4-enine + H2O = dodecanoate + sphing-4-enine. The enzyme catalyses N-tetradecanoylsphing-4-enine + H2O = tetradecanoate + sphing-4-enine. It catalyses the reaction N-hexadecanoylsphing-4-enine + H2O = sphing-4-enine + hexadecanoate. The catalysed reaction is N-octadecanoylsphing-4-enine + H2O = sphing-4-enine + octadecanoate. It carries out the reaction N-dodecanoyl-(4R)-hydroxysphinganine + H2O = (4R)-hydroxysphinganine + dodecanoate. The enzyme catalyses N-(dodecanoyl)-sphinganine + H2O = dodecanoate + sphinganine. It catalyses the reaction N-(acetyl)-sphing-4-enine + H2O = sphing-4-enine + acetate. The catalysed reaction is N-(hexanoyl)sphing-4-enine + H2O = hexanoate + sphing-4-enine. It carries out the reaction N-octanoylsphing-4-enine + H2O = octanoate + sphing-4-enine. The enzyme catalyses N-(9Z-octadecenoyl)-sphing-4-enine + H2O = sphing-4-enine + (9Z)-octadecenoate. It catalyses the reaction N-dodecanoylethanolamine + H2O = dodecanoate + ethanolamine. It participates in lipid metabolism; sphingolipid metabolism. Its function is as follows. Lysosomal ceramidase that hydrolyzes sphingolipid ceramides into sphingosine and free fatty acids at acidic pH. Ceramides, sphingosine, and its phosphorylated form sphingosine-1-phosphate are bioactive lipids that mediate cellular signaling pathways regulating several biological processes including cell proliferation, apoptosis and differentiation. Has a higher catalytic efficiency towards C12-ceramides versus other ceramides. Also catalyzes the reverse reaction allowing the synthesis of ceramides from fatty acids and sphingosine. For the reverse synthetic reaction, the natural sphingosine D-erythro isomer is more efficiently utilized as a substrate compared to D-erythro-dihydrosphingosine and D-erythro-phytosphingosine, while the fatty acids with chain lengths of 12 or 14 carbons are the most efficiently used. Also has an N-acylethanolamine hydrolase activity. By regulating the levels of ceramides, sphingosine and sphingosine-1-phosphate in the epidermis, mediates the calcium-induced differentiation of epidermal keratinocytes. Also indirectly regulates tumor necrosis factor/TNF-induced apoptosis. By regulating the intracellular balance between ceramides and sphingosine, in adrenocortical cells, probably also acts as a regulator of steroidogenesis. This chain is Acid ceramidase, found in Pan troglodytes (Chimpanzee).